Here is a 237-residue protein sequence, read N- to C-terminus: Class B acid phosphatase (237 aa).

An N-terminal signal peptide occupies residues M1–A23. D69 acts as the Nucleophile in catalysis. Positions 69 and 71 each coordinate Mg(2+). The active-site Proton donor is the D71. Substrate-binding positions include T137–G138 and K177. D192 is a binding site for Mg(2+).

The protein belongs to the class B bacterial acid phosphatase family. In terms of assembly, homotetramer. Mg(2+) is required as a cofactor.

It is found in the periplasm. The enzyme catalyses a phosphate monoester + H2O = an alcohol + phosphate. Functionally, dephosphorylates several organic phosphate monoesters. Also has a phosphotransferase activity catalyzing the transfer of low-energy phosphate groups from organic phosphate monoesters to free hydroxyl groups of various organic compounds. This Xenorhabdus bovienii (strain SS-2004) (Xenorhabdus nematophila subsp. bovienii) protein is Class B acid phosphatase.